The chain runs to 595 residues: Sorting nexin-9 (595 aa).

The region spanning 1 to 62 (MATKARVMYD…PTDYVEILPN (62 aa)) is the SH3 domain. Residues 89–100 (QTNSSSANSNNQ) show a composition bias toward low complexity. The disordered stretch occupies residues 89 to 199 (QTNSSSANSN…QRGNSRAGAS (111 aa)). S121 is modified (phosphoserine). The segment covering 129-144 (TDGTSAQRNSSANNWD) has biased composition (polar residues). Residues 159 to 169 (GDDDEWDEDWD) show a composition bias toward acidic residues. A Phosphoserine modification is found at S200. The tract at residues 201-213 (MKLPLNKFPGFAK) is critical for tubulation activity. A Phosphotyrosine modification is found at Y239. The 111-residue stretch at 250–360 (FDCVVADPRK…QQFLNFRDEK (111 aa)) folds into the PX domain. The a 1,2-diacyl-sn-glycero-3-phospho-(1D-myo-inositol-4,5-bisphosphate) site is built by R286, K288, and R327. K288 is subject to N6-acetyllysine. The region spanning 392–595 (LIEIEQKCDA…RQALSRFPVM (204 aa)) is the BAR domain.

This sequence belongs to the sorting nexin family. Homodimer, and homooligomer. Heterodimer with SNX18. Interacts with ITCH. Interacts (via SH3 domain) with TNK2, WASL and ACTR3. Identified in a complex with TNK2 and clathrin heavy chains. Identified in a complex with the AP-2 complex, clathrin and DNM2. Interacts (via SH3 domain) with DNM1 and DNM2. Identified in an oligomeric complex containing DNM1 and SNX9. Interacts with FCHSD1. Interacts with ADAM9 and ADAM15 cytoplasmic tails. Post-translationally, phosphorylated on tyrosine residues by TNK2. Phosphorylation promotes its activity in the degradation of EGFR. In terms of processing, ubiquitinated by ITCH. In terms of tissue distribution, detected in inner ear vestibula and in the cuticular plate of cochlear hair cells (at protein level).

Its subcellular location is the cytoplasmic vesicle membrane. The protein resides in the cell membrane. It localises to the cytoplasmic vesicle. It is found in the clathrin-coated vesicle. The protein localises to the golgi apparatus. Its subcellular location is the trans-Golgi network. The protein resides in the cell projection. It localises to the ruffle. It is found in the cytoplasm. In terms of biological role, involved in endocytosis and intracellular vesicle trafficking, both during interphase and at the end of mitosis. Required for efficient progress through mitosis and cytokinesis. Required for normal formation of the cleavage furrow at the end of mitosis. Plays a role in endocytosis via clathrin-coated pits, but also clathrin-independent, actin-dependent fluid-phase endocytosis. Plays a role in macropinocytosis. Promotes internalization of TNFR. Promotes degradation of EGFR after EGF signaling. Stimulates the GTPase activity of DNM1. Promotes DNM1 oligomerization. Promotes activation of the Arp2/3 complex by WASL, and thereby plays a role in the reorganization of the F-actin cytoskeleton. Binds to membranes enriched in phosphatidylinositol 4,5-bisphosphate and promotes membrane tubulation. Has lower affinity for membranes enriched in phosphatidylinositol 3-phosphate. The polypeptide is Sorting nexin-9 (Snx9) (Mus musculus (Mouse)).